Reading from the N-terminus, the 481-residue chain is UDP-N-acetylmuramoylalanine--D-glutamate ligase (481 aa).

108–114 is a binding site for ATP; the sequence is GTNGKTS.

The protein belongs to the MurCDEF family.

It is found in the cytoplasm. The catalysed reaction is UDP-N-acetyl-alpha-D-muramoyl-L-alanine + D-glutamate + ATP = UDP-N-acetyl-alpha-D-muramoyl-L-alanyl-D-glutamate + ADP + phosphate + H(+). Its pathway is cell wall biogenesis; peptidoglycan biosynthesis. Its function is as follows. Cell wall formation. Catalyzes the addition of glutamate to the nucleotide precursor UDP-N-acetylmuramoyl-L-alanine (UMA). In Bifidobacterium longum subsp. infantis (strain ATCC 15697 / DSM 20088 / JCM 1222 / NCTC 11817 / S12), this protein is UDP-N-acetylmuramoylalanine--D-glutamate ligase.